A 23-amino-acid chain; its full sequence is Basic phospholipase A2 intermexin (23 aa).

Belongs to the phospholipase A2 family. Group II subfamily. Requires Ca(2+) as cofactor. Contains 7 disulfide bonds. Expressed by the venom gland.

The protein resides in the secreted. The catalysed reaction is a 1,2-diacyl-sn-glycero-3-phosphocholine + H2O = a 1-acyl-sn-glycero-3-phosphocholine + a fatty acid + H(+). Its function is as follows. Snake venom phospholipase A2 (PLA2) that shows presynaptic neurotoxicity and low myotoxicity. PLA2 catalyzes the calcium-dependent hydrolysis of the 2-acyl groups in 3-sn-phosphoglycerides. The protein is Basic phospholipase A2 intermexin of Gloydius intermedius (Central Asian pit viper).